The sequence spans 537 residues: Pentatricopeptide repeat-containing protein At4g32450, mitochondrial (537 aa).

The N-terminal 110 residues, 1–110 (MIYTLTRGSL…EHSEIINQRN (110 aa)), are a transit peptide targeting the mitochondrion. Polar residues predominate over residues 113–140 (WQSSDGCSSYGTTGNGVPQENNTGGNHF). The disordered stretch occupies residues 113–148 (WQSSDGCSSYGTTGNGVPQENNTGGNHFQQDHSGHS). 6 PPR repeats span residues 145–179 (SGHS…GYVV), 180–210 (DLPR…ITSS), 215–249 (DISA…NLET), 250–280 (WCGV…GNKP), 281–316 (DGEM…GIIP), and 317–347 (CMEH…MEPN). The segment at 412 to 442 (YGIRYMAAGDISRPENRELYMALKSLKEHMI) is type E(+) motif. Residues 443-537 (EIGYVPLSKL…DGVCSCREYW (95 aa)) form a type DYW motif region.

The protein belongs to the PPR family. PCMP-H subfamily.

The protein resides in the mitochondrion. This Arabidopsis thaliana (Mouse-ear cress) protein is Pentatricopeptide repeat-containing protein At4g32450, mitochondrial (PCMP-H63).